We begin with the raw amino-acid sequence, 342 residues long: Ribosomal RNA small subunit methyltransferase C (342 aa).

It belongs to the methyltransferase superfamily. RsmC family. In terms of assembly, monomer.

Its subcellular location is the cytoplasm. It carries out the reaction guanosine(1207) in 16S rRNA + S-adenosyl-L-methionine = N(2)-methylguanosine(1207) in 16S rRNA + S-adenosyl-L-homocysteine + H(+). Specifically methylates the guanine in position 1207 of 16S rRNA in the 30S particle. In Salmonella newport (strain SL254), this protein is Ribosomal RNA small subunit methyltransferase C.